A 209-amino-acid polypeptide reads, in one-letter code: Redox-sensing transcriptional repressor Rex (209 aa).

A DNA-binding region (H-T-H motif) is located at residues 16-55 (LYYRFIQNLSLSGKQRVSSAELSEAVKVDSATIRRDFSYF). 90–95 (GVGNLG) lines the NAD(+) pocket.

This sequence belongs to the transcriptional regulatory Rex family. Homodimer.

The protein resides in the cytoplasm. Modulates transcription in response to changes in cellular NADH/NAD(+) redox state. The chain is Redox-sensing transcriptional repressor Rex from Bacillus mycoides (strain KBAB4) (Bacillus weihenstephanensis).